Here is a 209-residue protein sequence, read N- to C-terminus: MGQKVHPRGFRLGVSADWQTRWFNEKNYATWLKEDEEIRKVVKNAYSQAGISEVFIERPDNESVTITIKTARPGVIIGKKGAEIGKLREDLEKELNRRVIVNVEEIKTPETDAQLVAENIAGRIEKRASYKRAMKRALSDALRKGATGVKVMVSGRLAGAEIARREWYLRGRLPLQTVRAVVDYGTATAKTKYGTIGIKVWIYKGDAEV.

The 70-residue stretch at 38 to 107 (IRKVVKNAYS…RVIVNVEEIK (70 aa)) folds into the KH type-2 domain.

Belongs to the universal ribosomal protein uS3 family. In terms of assembly, part of the 30S ribosomal subunit. Forms a tight complex with proteins S10 and S14.

Binds the lower part of the 30S subunit head. Binds mRNA in the 70S ribosome, positioning it for translation. The protein is Small ribosomal subunit protein uS3 of Pseudothermotoga lettingae (strain ATCC BAA-301 / DSM 14385 / NBRC 107922 / TMO) (Thermotoga lettingae).